A 697-amino-acid chain; its full sequence is CENP-A multicopy suppressor protein 2 (697 aa).

Residues 351 to 378 form a GATA-type; atypical zinc finger; sequence CQNCGTIKTANWRNATYMNITLMLCNAC. The disordered stretch occupies residues 443-484; that stretch reads PLNRLTSLDSTHSAPDPNHISKPSVVNQQKSRGGPRTAKLKN. Residues 445-455 show a composition bias toward polar residues; that stretch reads NRLTSLDSTHS.

As to quaternary structure, interacts with CENP-A.

Its subcellular location is the nucleus. It is found in the chromosome. It localises to the centromere. Its function is as follows. Required for proper chromosome segregation via regulation of CENP-A localization to the centromere. In Schizosaccharomyces pombe (strain 972 / ATCC 24843) (Fission yeast), this protein is CENP-A multicopy suppressor protein 2 (ams2).